The primary structure comprises 358 residues: MFSRSSSTRSSLVGSRSGSIFGGGSVKKSSTVRGFSAGLERSRGLPSASAGENQISLPGLRIPVKASSQPGNYYLKERGIDLPIVQQQKFLAADGKEMGECYLLDTSRTDLLDAAKAALNESNLLEFNKFKEFKKYKGKNNEFSLVEASVFDKLIRKDDSPIHLNRLLIAVLPAVGKGTPGTARIKIRDARLDDGYGELFSSENRVDSGYIYCINVGYSVPKSEIDYKINIDFAGVPIKDGKSPIWVKAAFSLAGGPPVFLDGTMSLGAEILPDSHKELLGTSALLLNEANSNRKSFSGDDGELRRDYPYKRFEEISPLDSISQVDTASQDSVNEVNTENVQNGTGEVYLAPPSHSVY.

Functionally, transports viral genome to neighboring plant cells directly through plasmosdesmata, without any budding. The movement protein allows efficient cell to cell propagation, by bypassing the host cell wall barrier (Potential). The chain is Putative movement protein from Raspberry bushy dwarf virus (isolate Malling Jewel raspberry/R15) (RBDV).